A 130-amino-acid polypeptide reads, in one-letter code: Chorion class B protein PC10 (130 aa).

The interval 1–22 (GAWNGRLGCGCGGIAPAAELAA) is left arm. Residues 23-93 (SYGGGLGVAS…GNGALGITAE (71 aa)) are central domain. The segment at 94–130 (RGYGAGIGYEGLGLGYGAGIGYKGYGLGGCGCGCGRL) is right arm (Gly-rich tandem repeats).

Belongs to the chorion protein family.

Its function is as follows. This protein is one of many from the eggshell of the silk moth. In Antheraea polyphemus (Polyphemus moth), this protein is Chorion class B protein PC10.